Consider the following 440-residue polypeptide: WAS/WASL-interacting protein family member 2 (440 aa).

Positions 1 to 18 are enriched in pro residues; it reads MPIPPPPPPPPGPPPPPT. Residues 1–36 are disordered; sequence MPIPPPPPPPPGPPPPPTFHQANTEQPKLSRDEQRG. In terms of domain architecture, WH2 spans 36-53; that stretch reads GRGALLQDICKGTKLKKV. Arginine 37 bears the Asymmetric dimethylarginine mark. Positions 49-52 are binds actin; the sequence is KLKK. Disordered stretches follow at residues 56 to 387 and 419 to 440; these read INDR…DSIT and RIYP…PILR. The span at 116 to 133 shows a compositional bias: low complexity; that stretch reads PSSRAAAPRPPVSAASGR. A compositionally biased stretch (polar residues) spans 161–172; it reads RPNTTSSTGMKH. Pro residues-rich tracts occupy residues 176-193, 222-236, 249-262, and 356-378; these read APPP…PTPL, EGPP…PPSP, APPP…PGVP, and RGKP…PPPL.

The protein belongs to the verprolin family. In terms of assembly, interacts with WASL and WASP, and this interaction results in cytoplasmic relocation of these two proteins along actin filaments. Interacts with NCK2 resulting in the localization to sites of focal adhesions. No interaction was seen with WASF2 and WASF3. Expressed mainly in brain, colon, lung and stomach (at protein level). Ubiquitously expressed, with high expression in brain, kidney, lung, and placenta.

The protein localises to the cytoplasm. It is found in the cytoskeleton. In terms of biological role, plays an active role in the formation of cell surface protrusions downstream of activated PDGFB receptors. Plays an important role in actin-microspike formation through cooperation with WASL. May cooperate with WASP and WASL to induce mobilization and reorganization of the actin filament system. The protein is WAS/WASL-interacting protein family member 2 (WIPF2) of Homo sapiens (Human).